The chain runs to 282 residues: Transcription factor HES-1 (282 aa).

The tract at residues 1-44 (MPADIMEKNSSSPVAATPASVNTTPDKPKTASEHRKSSKPIMEK) is disordered. A compositionally biased stretch (low complexity) spans 10–21 (SSSPVAATPASV). Over residues 26–35 (DKPKTASEHR) the composition is skewed to basic and acidic residues. Positions 34–91 (HRKSSKPIMEKRRRARINESLSQLKTLILDALKKDSSRHSKLEKADILEMTVKHLRNL) constitute a bHLH domain. The 34-residue stretch at 110 to 143 (YRAGFSECMNEVTRFLSTCEGVNTEVRTRLLGHL) folds into the Orange domain. 2 disordered regions span residues 158 to 204 (QAHP…GSAP) and 256 to 282 (TSVGPNAVSPSSGSSLTSDSMWRPWRN). Pro residues-rich tracts occupy residues 164-174 (QAPPPPPPSGP) and 182-202 (FAPPPPPLVPIPGGAAPPPGS). Positions 264–275 (SPSSGSSLTSDS) are enriched in low complexity. A WRPW motif motif is present at residues 277 to 280 (WRPW).

Interacts with SIRT1. Transcription repression requires formation of a complex with a corepressor protein of the Groucho/TLE family. Interacts (via WPRW motif) with TLE1, and more weakly with TLE2. Interacts with HES6. Interacts with an FA complex, composed of FANCA, FANCF, FANCG and FANCL, but not of FANCC, nor FANCE. In terms of tissue distribution, expressed at high levels in undifferentiated neural precursor cells, but the level of expression decreases as neural differentiation proceeds.

It is found in the nucleus. Functionally, transcriptional repressor of genes that require a bHLH protein for their transcription. May act as a negative regulator of myogenesis by inhibiting the functions of MYOD1 and ASH1. Binds DNA on N-box motifs: 5'-CACNAG-3' with high affinity and on E-box motifs: 5'-CANNTG-3' with low affinity. May play a role in a functional FA core complex response to DNA cross-link damage, being required for the stability and nuclear localization of FA core complex proteins, as well as for FANCD2 monoubiquitination in response to DNA damage. This Mus musculus (Mouse) protein is Transcription factor HES-1 (Hes1).